The sequence spans 101 residues: uncharacterized protein (101 aa).

An N-terminal signal peptide occupies residues 1–19 (MKFKYLSTPLLFSALLFSA). Cys20 carries N-palmitoyl cysteine lipidation. Cys20 is lipidated: S-diacylglycerol cysteine.

It belongs to the MG439/MG440 family.

It localises to the cell membrane. This is an uncharacterized protein from Mycoplasma pneumoniae (strain ATCC 29342 / M129 / Subtype 1) (Mycoplasmoides pneumoniae).